The following is a 206-amino-acid chain: Threonine efflux protein (206 aa).

Residues 1-21 form a helical membrane-spanning segment; sequence MLMLFFTVAMVHIVALMSPGP. At 22–43 the chain is on the periplasmic side; that stretch reads DFFFVSQTAVSRSRKEAMMGVL. Residues 44–64 traverse the membrane as a helical segment; it reads GITCGVMVWAGVALLGLHLII. At 65-66 the chain is on the cytoplasmic side; sequence EK. A helical transmembrane segment spans residues 67–87; it reads MAWLHTIIMVGGGLYLCWMGY. Over 88–149 the chain is Periplasmic; that stretch reads QMLRGALKKQ…VGDNVGAAAR (62 aa). Residues 150–173 traverse the membrane as a helical segment; that stretch reads WGIFALITLETLAWFTVVASLFAL. The Cytoplasmic portion of the chain corresponds to 174–206; that stretch reads PKMRRGYQRLAKWIDGFAGALFAGFGIHLIISR.

It belongs to the Rht family.

Its subcellular location is the cell inner membrane. Functionally, conducts the efflux of threonine. The sequence is that of Threonine efflux protein (rhtC) from Salmonella typhi.